Reading from the N-terminus, the 548-residue chain is Esterase-5A (548 aa).

Residues 1 to 19 form the signal peptide; the sequence is MHLVRWLICLIQLWIQLGA. Cysteines 87 and 106 form a disulfide. N-linked (GlcNAc...) asparagine glycans are attached at residues Asn95 and Asn116. The active-site Acyl-ester intermediate is Ser210. Cys262 and Cys274 form a disulfide bridge. N-linked (GlcNAc...) asparagine glycosylation occurs at Asn479. The cysteines at positions 518 and 539 are disulfide-linked.

The protein belongs to the type-B carboxylesterase/lipase family.

It localises to the secreted. It catalyses the reaction a carboxylic ester + H2O = an alcohol + a carboxylate + H(+). The sequence is that of Esterase-5A (Est-5A) from Drosophila persimilis (Fruit fly).